The sequence spans 1317 residues: DNA-directed RNA polymerase subunit beta' (1317 aa).

Zn(2+) contacts are provided by cysteine 214, cysteine 286, cysteine 293, and cysteine 296. The segment at 1279–1317 is disordered; the sequence is RAYAGTQLSQDDEEFEETYDTDEDDFDMDDDDDFGDDED. Positions 1288-1317 are enriched in acidic residues; that stretch reads QDDEEFEETYDTDEDDFDMDDDDDFGDDED.

It belongs to the RNA polymerase beta' chain family. RpoC2 subfamily. In cyanobacteria the RNAP catalytic core is composed of 2 alpha, 1 beta, 1 beta', 1 gamma and 1 omega subunit. When a sigma factor is associated with the core the holoenzyme is formed, which can initiate transcription. The cofactor is Zn(2+).

The catalysed reaction is RNA(n) + a ribonucleoside 5'-triphosphate = RNA(n+1) + diphosphate. DNA-dependent RNA polymerase catalyzes the transcription of DNA into RNA using the four ribonucleoside triphosphates as substrates. This is DNA-directed RNA polymerase subunit beta' from Synechocystis sp. (strain ATCC 27184 / PCC 6803 / Kazusa).